The chain runs to 127 residues: Photosystem II reaction center Psb28 protein (127 aa).

Residues 107–127 (GLGYSQNQNSDQTDGDANAEA) form a disordered region. Over residues 109-118 (GYSQNQNSDQ) the composition is skewed to polar residues.

The protein belongs to the Psb28 family. In terms of assembly, part of the photosystem II complex.

It is found in the cellular thylakoid membrane. This is Photosystem II reaction center Psb28 protein from Parasynechococcus marenigrum (strain WH8102).